A 92-amino-acid chain; its full sequence is Large ribosomal subunit protein bL25 (92 aa).

Belongs to the bacterial ribosomal protein bL25 family. As to quaternary structure, part of the 50S ribosomal subunit; part of the 5S rRNA/L5/L18/L25 subcomplex. Contacts the 5S rRNA. Binds to the 5S rRNA independently of L5 and L18.

Its function is as follows. This is one of the proteins that binds to the 5S RNA in the ribosome where it forms part of the central protuberance. In Photobacterium damsela subsp. piscicida (Pasteurella piscicida), this protein is Large ribosomal subunit protein bL25.